Here is a 223-residue protein sequence, read N- to C-terminus: Noggin-3 (223 aa).

A signal peptide spans 1-23 (MDNIPYFLATVLIFSLGFRIEEG). N-linked (GlcNAc...) asparagine glycosylation is found at asparagine 60 and asparagine 93.

Belongs to the noggin family. As to quaternary structure, homodimer; disulfide-linked.

The protein resides in the secreted. May function as an inhibitor of bone morphogenetic proteins (BMP) signaling during later stages of development including late phases of dorsoventral patterning, to refine the early pattern set up by the interaction of chordino and BMP2/4. Not involved in organizer function or early phases of dorsoventral pattern formation. The chain is Noggin-3 (nog3) from Danio rerio (Zebrafish).